Here is a 622-residue protein sequence, read N- to C-terminus: Chaperone protein HscA homolog (622 aa).

The protein belongs to the heat shock protein 70 family.

Its function is as follows. Chaperone involved in the maturation of iron-sulfur cluster-containing proteins. Has a low intrinsic ATPase activity which is markedly stimulated by HscB. The polypeptide is Chaperone protein HscA homolog (Delftia acidovorans (strain DSM 14801 / SPH-1)).